Here is a 252-residue protein sequence, read N- to C-terminus: MQLPPALCARLAAGPGAAEPLPVERDPAAGAAPFRFVARPVRFPREHQFFEDGDVQRHLYLQDVIMQVADVPEKPRVPAFACQVAGCCQVFDALDDYEHHYHTLHGNVCSFCKRAFPSGHLLDAHILEWHDSLFQILSERQDMYQCLVEGCTEKFKTSRDRKDHMVRMHLYPADFRFDKPKKSRSPASAEAPGDSGERSEGEAMEICSEPVAASPAPAGERRIYRHRIPSTICFGQGAARGFKSNKKKTKQC.

C2H2-type zinc fingers lie at residues 80-105 (FACQVAGCCQVFDALDDYEHHYHTLH), 107-130 (NVCSFCKRAFPSGHLLDAHILEWH), and 144-169 (YQCLVEGCTEKFKTSRDRKDHMVRMH). The tract at residues 177-221 (FDKPKKSRSPASAEAPGDSGERSEGEAMEICSEPVAASPAPAGER) is disordered. Arg240 is modified (omega-N-methylarginine).

This sequence belongs to the krueppel C2H2-type zinc-finger protein family.

Its subcellular location is the nucleus. Its function is as follows. May be involved in transcriptional regulation. The sequence is that of Zinc finger protein 511 from Homo sapiens (Human).